The sequence spans 562 residues: Oxygen-dependent choline dehydrogenase (562 aa).

4–33 provides a ligand contact to FAD; sequence DYIIIGAGSAGNVLATRLTEDPNTSVLLLE. His-473 functions as the Proton acceptor in the catalytic mechanism.

Belongs to the GMC oxidoreductase family. The cofactor is FAD.

Its subcellular location is the cell membrane. It catalyses the reaction choline + A = betaine aldehyde + AH2. It carries out the reaction betaine aldehyde + NAD(+) + H2O = glycine betaine + NADH + 2 H(+). It participates in amine and polyamine biosynthesis; betaine biosynthesis via choline pathway; betaine aldehyde from choline (cytochrome c reductase route): step 1/1. Functionally, involved in the biosynthesis of the osmoprotectant glycine betaine. Catalyzes the oxidation of choline to betaine aldehyde and betaine aldehyde to glycine betaine at the same rate. The polypeptide is Oxygen-dependent choline dehydrogenase (Escherichia coli O157:H7).